The following is an 89-amino-acid chain: Putative membrane protein insertion efficiency factor (89 aa).

It belongs to the UPF0161 family.

The protein localises to the cell inner membrane. Its function is as follows. Could be involved in insertion of integral membrane proteins into the membrane. The sequence is that of Putative membrane protein insertion efficiency factor from Petrotoga mobilis (strain DSM 10674 / SJ95).